The following is a 55-amino-acid chain: Protein CADMIUM TOLERANCE 1 (55 aa).

Residues 24 to 40 traverse the membrane as a helical segment; that stretch reads GCLYACIFTALCCFCCY.

Belongs to the CYSTM1 family.

Its subcellular location is the cell membrane. The protein localises to the secreted. The protein resides in the cell wall. Confers resistance to heavy metal ions (e.g. cadmium (CdCl(2)) and copper (CuCl(2))) by chelating them at the plasma membrane of root cells, thus stopping their entry and reducing their accumulation. This chain is Protein CADMIUM TOLERANCE 1, found in Digitaria ciliaris (Southern crabgrass).